Here is a 461-residue protein sequence, read N- to C-terminus: uncharacterized protein (461 aa).

13 consecutive transmembrane segments (helical) span residues Gly-13–Glu-33, Ala-54–Val-74, Val-81–Leu-101, Gly-120–Met-140, Val-170–Gly-190, Tyr-211–Phe-231, Phe-256–Ile-276, Ile-286–Val-306, Ser-314–Leu-334, Phe-349–Phe-369, Thr-377–Pro-397, Ile-399–Thr-419, and Val-439–Trp-459.

The protein belongs to the SLC13A/DASS transporter (TC 2.A.47) family. NADC subfamily.

It localises to the cell membrane. This is an uncharacterized protein from Haemophilus influenzae (strain ATCC 51907 / DSM 11121 / KW20 / Rd).